We begin with the raw amino-acid sequence, 63 residues long: Large ribosomal subunit protein uL29 (63 aa).

The protein belongs to the universal ribosomal protein uL29 family.

In Herminiimonas arsenicoxydans, this protein is Large ribosomal subunit protein uL29.